An 89-amino-acid polypeptide reads, in one-letter code: Serine-rich and transmembrane domain-containing 2 (89 aa).

Residue Asn-11 is glycosylated (N-linked (GlcNAc...) asparagine). The helical transmembrane segment at 38–58 (YVGLFLSLLAILLILLFTMLL) threads the bilayer.

It is found in the membrane. The protein is Serine-rich and transmembrane domain-containing 2 of Mus musculus (Mouse).